Reading from the N-terminus, the 286-residue chain is Bifunctional protein FolD (286 aa).

Residues 168–170 (GRG), Thr195, and Val236 each bind NADP(+).

Belongs to the tetrahydrofolate dehydrogenase/cyclohydrolase family. In terms of assembly, homodimer.

The catalysed reaction is (6R)-5,10-methylene-5,6,7,8-tetrahydrofolate + NADP(+) = (6R)-5,10-methenyltetrahydrofolate + NADPH. It catalyses the reaction (6R)-5,10-methenyltetrahydrofolate + H2O = (6R)-10-formyltetrahydrofolate + H(+). Its pathway is one-carbon metabolism; tetrahydrofolate interconversion. Functionally, catalyzes the oxidation of 5,10-methylenetetrahydrofolate to 5,10-methenyltetrahydrofolate and then the hydrolysis of 5,10-methenyltetrahydrofolate to 10-formyltetrahydrofolate. This is Bifunctional protein FolD from Mycolicibacterium fortuitum (Mycobacterium fortuitum).